The following is a 468-amino-acid chain: Zinc-regulated transporter 1 (468 aa).

Positions 1–17 (MKFTHLFFIGLLTKVYT) are cleaved as a signal peptide. The Extracellular segment spans residues 18 to 185 (ETVTVLSTRS…VKRDYDIPLR (168 aa)). N-linked (GlcNAc...) asparagine glycosylation is found at asparagine 57 and asparagine 67. Residues 186–206 (IGLLFVILVTSGIGSFGPIVL) form a helical membrane-spanning segment. At 207 to 217 (KQFVNLSQENY) the chain is on the cytoplasmic side. A helical membrane pass occupies residues 218 to 238 (IIVIIKQFGTGIIISTAFVHL). The Extracellular segment spans residues 239–257 (MTHAQLMWSNSCLKIKYEG). The helical transmembrane segment at 258–278 (TGASITMAGIFIAFIIEYIAL) threads the bilayer. At 279–314 (RIVNARDTGKVDKKEIEETSSNEQSLHGISVNDKIS) the chain is on the cytoplasmic side. The chain crosses the membrane as a helical span at residues 315–335 (VMILEAGIIFHSILIGITLVV). Residues 336–338 (TDD) are Extracellular-facing. Residues 339–359 (VYFITLFIVIVFHQFFEGLAL) form a helical membrane-spanning segment. Residues 360-374 (SSRIISITNASLSTK) lie on the Cytoplasmic side of the membrane. The chain crosses the membrane as a helical span at residues 375-395 (LVMALMFALITPIGMAIGIGV). Residues 396–406 (LNKFNGNDPST) are Extracellular-facing. Residues 407-427 (LIALGTLDSFSAGVLLWTGLI) form a helical membrane-spanning segment. Over 428-447 (EMWSHDWLHGHLRNSSFVKT) the chain is Cytoplasmic. A helical membrane pass occupies residues 448–468 (TVALVSLILGMLLMSLLGNWA).

Belongs to the ZIP transporter (TC 2.A.5) family.

It localises to the cell membrane. The enzyme catalyses Zn(2+)(in) = Zn(2+)(out). Functionally, zinc transporter that acts with PRA1 in sequestration of zinc from host tissues during infection. The pH-regulated antigen 1 (PRA1) binds zinc from its environment and then reassociates with ZRT1 to acquire this essential metal. In Candida albicans (strain SC5314 / ATCC MYA-2876) (Yeast), this protein is Zinc-regulated transporter 1 (ZRT101).